We begin with the raw amino-acid sequence, 420 residues long: Protein TabA (420 aa).

At K57 the chain carries N6-(pyridoxal phosphate)lysine.

The protein belongs to the Orn/Lys/Arg decarboxylase class-II family. Pyridoxal 5'-phosphate serves as cofactor.

Functionally, involved in tabtoxin production and pathogenicity. This Pseudomonas amygdali pv. tabaci (Pseudomonas syringae pv. tabaci) protein is Protein TabA (tabA).